The following is a 463-amino-acid chain: Hexokinase-7 (463 aa).

The 450-residue stretch at 7-456 (AAAEQVVAAL…SGLGAALIAA (450 aa)) folds into the Hexokinase domain. The interval 62–199 (NGTEEGLFYA…GLDMRVSALI (138 aa)) is hexokinase small subdomain. Residues glycine 76, threonine 77, and asparagine 78 each coordinate ADP. The D-glucose site is built by threonine 165, lysine 166, asparagine 200, and aspartate 201. The segment at 200–445 (NDTVGTLAAG…KSVAVKLAND (246 aa)) is hexokinase large subdomain. Threonine 224 lines the ADP pocket. Residues asparagine 227, glutamate 255, and glutamate 286 each contribute to the D-glucose site. Glycine 410 contributes to the ADP binding site.

This sequence belongs to the hexokinase family. Expressed in roots, leaves, flowers, immature seeds and seed coat.

The protein localises to the cytoplasm. It carries out the reaction a D-hexose + ATP = a D-hexose 6-phosphate + ADP + H(+). The enzyme catalyses D-fructose + ATP = D-fructose 6-phosphate + ADP + H(+). It catalyses the reaction D-glucose + ATP = D-glucose 6-phosphate + ADP + H(+). The protein operates within carbohydrate metabolism; hexose metabolism. It functions in the pathway carbohydrate degradation; glycolysis; D-glyceraldehyde 3-phosphate and glycerone phosphate from D-glucose: step 1/4. Fructose and glucose phosphorylating enzyme. Functions in sugar signaling via a glycolysis-dependent manner under aerobic conditions, but its signaling role is suppressed when oxygen is deficient. The protein is Hexokinase-7 (HXK7) of Oryza sativa subsp. japonica (Rice).